The chain runs to 202 residues: Small ribosomal subunit protein uS4 (202 aa).

The 78-residue stretch at 91–168 (SMLSSVLYNS…QKVPDYLEVD (78 aa)) folds into the S4 RNA-binding domain.

Belongs to the universal ribosomal protein uS4 family. Part of the 30S ribosomal subunit. Contacts protein S5. The interaction surface between S4 and S5 is involved in control of translational fidelity.

Functionally, one of the primary rRNA binding proteins, it binds directly to 16S rRNA where it nucleates assembly of the body of the 30S subunit. In terms of biological role, with S5 and S12 plays an important role in translational accuracy. This is Small ribosomal subunit protein uS4 from Ehrlichia ruminantium (strain Welgevonden).